The sequence spans 339 residues: D-erythrose-4-phosphate dehydrogenase (339 aa).

Residue 11 to 12 (RI) coordinates NAD(+). Residues 153–155 (SCT), Arg199, 212–213 (TK), and Arg235 contribute to the substrate site. The active-site Nucleophile is the Cys154. Position 317 (Asn317) interacts with NAD(+).

This sequence belongs to the glyceraldehyde-3-phosphate dehydrogenase family. Epd subfamily. In terms of assembly, homotetramer.

It is found in the cytoplasm. The enzyme catalyses D-erythrose 4-phosphate + NAD(+) + H2O = 4-phospho-D-erythronate + NADH + 2 H(+). The protein operates within cofactor biosynthesis; pyridoxine 5'-phosphate biosynthesis; pyridoxine 5'-phosphate from D-erythrose 4-phosphate: step 1/5. Its function is as follows. Catalyzes the NAD-dependent conversion of D-erythrose 4-phosphate to 4-phosphoerythronate. The chain is D-erythrose-4-phosphate dehydrogenase from Shewanella frigidimarina (strain NCIMB 400).